The following is a 309-amino-acid chain: MSAASHIHSVACRLSSSFLASPKLKLHPRLSFFFHSSSFRNHIITRSVFCSSSHLSVRVSSYHSSVAAKATTSAMGDTATDAGMDAVQRRLMFEDECILVDENDHVVGHDTKYNCHLMEKIESDNLLHRAFSVFLFNSKYELLLQQRSATKVTFPLVWTNTCCSHPRYRESELVDENALGVRNAAQRKLLDELGIPAEDVPVDQFIPLGRMLYKAPSDGKWGEHELDYLLFIIRDVNVHPNPDEVADVKYVNQDQLKDLLRKVDAGEEGLKLSPWFRLVVENFLFKWWDHVEKGTLQDATDMKTIHKLT.

Lysine 112 is a binding site for substrate. Histidine 116 and histidine 128 together coordinate Mg(2+). The Nudix hydrolase domain maps to 126-278 (LLHRAFSVFL…GLKLSPWFRL (153 aa)). Residues arginine 147 and lysine 151 each coordinate substrate. Cysteine 163 is a catalytic residue. A substrate-binding site is contributed by serine 164. Positions 223 and 225 each coordinate Mg(2+). Residue glutamate 225 is part of the active site.

Belongs to the IPP isomerase type 1 family. It depends on Mg(2+) as a cofactor.

It catalyses the reaction isopentenyl diphosphate = dimethylallyl diphosphate. It functions in the pathway isoprenoid biosynthesis; dimethylallyl diphosphate biosynthesis; dimethylallyl diphosphate from isopentenyl diphosphate: step 1/1. The protein operates within porphyrin-containing compound metabolism; chlorophyll biosynthesis. Its function is as follows. Catalyzes the 1,3-allylic rearrangement of the homoallylic substrate isopentenyl (IPP) to its highly electrophilic allylic isomer, dimethylallyl diphosphate (DMAPP). The polypeptide is Isopentenyl-diphosphate Delta-isomerase II (IPI2) (Camptotheca acuminata (Happy tree)).